Reading from the N-terminus, the 243-residue chain is Zinc import ATP-binding protein ZnuC (243 aa).

Residues Leu25–Asn242 enclose the ABC transporter domain. Gly57–Thr64 contacts ATP.

This sequence belongs to the ABC transporter superfamily. Zinc importer (TC 3.A.1.15.5) family. As to quaternary structure, the complex is composed of two ATP-binding proteins (ZnuC), two transmembrane proteins (ZnuB) and a solute-binding protein (ZnuA).

Its subcellular location is the cell inner membrane. The enzyme catalyses Zn(2+)(out) + ATP(in) + H2O(in) = Zn(2+)(in) + ADP(in) + phosphate(in) + H(+)(in). Part of the ABC transporter complex ZnuABC involved in zinc import. Responsible for energy coupling to the transport system. This chain is Zinc import ATP-binding protein ZnuC, found in Anaplasma phagocytophilum (strain HZ).